Consider the following 230-residue polypeptide: Transcription factor bHLH147 (230 aa).

Over residues 1-17 (MESISPVSNQLLQPTTT) the composition is skewed to polar residues. Residues 1–52 (MESISPVSNQLLQPTTTSSNSDRSRRKRKKKSSPSSVEKSPSPSISLEKWRS) form a disordered region. Positions 33 to 46 (SPSSVEKSPSPSIS) are enriched in low complexity. Residues 147-196 (KQRATVLRLKAKGLPAVQRKVKVLSRLVPGCRKQSLPVVLEETTDYIAAM) form the bHLH domain. The tract at residues 210–230 (VSSSPPPPTPGHEGGQTHMLG) is disordered.

In terms of assembly, homodimer. Interacts with PRE3.

The protein resides in the nucleus. In terms of biological role, atypical bHLH transcription factor probably unable to bind DNA. Negatively regulates brassinosteroid signaling. The chain is Transcription factor bHLH147 (BHLH147) from Arabidopsis thaliana (Mouse-ear cress).